The sequence spans 208 residues: Octanoyltransferase (208 aa).

Residues 29 to 208 (KTQDELVWLL…KEFNKVFCNC (180 aa)) enclose the BPL/LPL catalytic domain. Residues 68–75 (RGGKYTYH), 140–142 (AFG), and 153–155 (GVS) contribute to the substrate site. Cysteine 171 serves as the catalytic Acyl-thioester intermediate.

Belongs to the LipB family.

Its subcellular location is the cytoplasm. The enzyme catalyses octanoyl-[ACP] + L-lysyl-[protein] = N(6)-octanoyl-L-lysyl-[protein] + holo-[ACP] + H(+). It functions in the pathway protein modification; protein lipoylation via endogenous pathway; protein N(6)-(lipoyl)lysine from octanoyl-[acyl-carrier-protein]: step 1/2. Its function is as follows. Catalyzes the transfer of endogenously produced octanoic acid from octanoyl-acyl-carrier-protein onto the lipoyl domains of lipoate-dependent enzymes. Lipoyl-ACP can also act as a substrate although octanoyl-ACP is likely to be the physiological substrate. This chain is Octanoyltransferase, found in Ehrlichia ruminantium (strain Gardel).